Reading from the N-terminus, the 150-residue chain is 16 kDa phloem protein 1 (150 aa).

The 108-residue stretch at 1–108 (MGMGMMEVHL…LAEGVRKGKS (108 aa)) folds into the C2 domain. Ca(2+)-binding residues include aspartate 20, aspartate 27, aspartate 78, aspartate 80, and aspartate 86.

Ca(2+) is required as a cofactor. Sieve elements of leaves, stems, roots and flowers.

Its function is as follows. Binds to both sense and antisense RNA. Interacts with mesophyll plasmodesmata to mediate its own cell-to-cell transport and potentiate RNA trafficking. The polypeptide is 16 kDa phloem protein 1 (PP16-1) (Cucurbita maxima (Pumpkin)).